A 325-amino-acid chain; its full sequence is MHKKIDPQTKELYLQKKGEYKEKIKELVQKKKELLSTDNKDELIKINEKIKRYKILYKNKDPNLIHFKDDYNFDNIFEIDNYNLWYSNKAKHALKDINLGIKKNKVTALIGPSGCGKSTFIRSLNRMHDLTDGVSKTGSIFFLSKNIYSKTLPELELRSKVGMVFQKPTPFSLSIYENIAYALKSHGIKDKIKIDQIVKESLEGAALWDDVKDILFQSAHGLSGGQQQRLSIARAIALKPEVLLMDEPTSALDPIATNKIEQLIHQLKKSYSIVIVTHSMAQAQRVSDETVFFYEGRVLEHGTTKQIFTQPNNEKTKDYIDGRIG.

One can recognise an ABC transporter domain in the interval Ile-79 to Ile-320. Gly-111 to Ser-118 provides a ligand contact to ATP.

It belongs to the ABC transporter superfamily. Phosphate importer (TC 3.A.1.7) family. As to quaternary structure, the complex is composed of two ATP-binding proteins (PstB), two transmembrane proteins (PstC and PstA) and a solute-binding protein (PstS).

Its subcellular location is the cell membrane. It carries out the reaction phosphate(out) + ATP + H2O = ADP + 2 phosphate(in) + H(+). Its function is as follows. Part of the ABC transporter complex PstSACB involved in phosphate import. Responsible for energy coupling to the transport system. This chain is Phosphate import ATP-binding protein PstB, found in Mycoplasmoides gallisepticum (strain R(low / passage 15 / clone 2)) (Mycoplasma gallisepticum).